The following is a 538-amino-acid chain: Carboxypeptidase 2 (538 aa).

The first 21 residues, 1–21, serve as a signal peptide directing secretion; that stretch reads MVAYRFLTLISLGLGSHCVSA. A glycan (N-linked (GlcNAc...) asparagine) is linked at asparagine 46. The disordered stretch occupies residues 53–76; it reads PAFTSPGTVSRGFSDGTSGPTRDE. The Peptidase M14 domain maps to 71-351; sequence GPTRDETMEG…VMAKSVLQTA (281 aa). The Zn(2+) site is built by histidine 136, glutamate 139, and histidine 224. Glutamate 322 acts as the Proton donor/acceptor in catalysis. N-linked (GlcNAc...) asparagine glycans are attached at residues asparagine 393 and asparagine 459.

It belongs to the peptidase M14 family. Zn(2+) serves as cofactor.

It localises to the secreted. In terms of biological role, extracellular metalloprotease that contributes to pathogenicity. This is Carboxypeptidase 2 (MCPB) from Trichophyton rubrum (Athlete's foot fungus).